We begin with the raw amino-acid sequence, 833 residues long: Vacuolar protein sorting-associated protein 16 homolog (833 aa).

Belongs to the VPS16 family. As to quaternary structure, component of the homotypic fusion and vacuole protein sorting (HOPS) complex, composed of Vps16A, car/Vps33A, dor/Vps18, Vps39, Vps11 and lt/Vps41. Interacts with Syx17 (via SNARE domain); the interaction may involve multiple components of the HOPS complex and may promote assembly of the Syx17-Snap29-Vamp7 trans-SNARE complex. Component of the class C core vacuole/endosome tethering (CORVET) complex composed of at least Vps8, dor/Vps18, car/Vps33A and Vps16A; unlike in other species, Vps11 is not part of the Drosophila complex. Due to the reduced number of components the Drosophila CORVET complex is often referred to as the miniCORVET complex. The tethering complex core made up of Vps16A, car/Vps33A and dor/Vps18 and shared by both HOPS and CORVET, preferentially associates with CORVET-specific Vps8 over HOPS-specific lt/Vps41. Interacts with Rab2 (GTP-bound form).

Its subcellular location is the late endosome membrane. The protein localises to the lysosome membrane. It is found in the cytoplasmic vesicle. It localises to the autophagosome. Functionally, core component of the class C core vacuole/endosome tethering (CORVET) and the homotypic fusion and vacuole protein sorting (HOPS) tethering complexes involved in endo-lysosomal vesicle trafficking and lysosome biogenesis. The CORVET complex facilitates docking and fusion of endosomal vesicles during endosome maturation, acts upstream of HOPS, but is not involved in autophagic flux. The CORVET complex may cooperate with the early endosomal tether Rbsn-5 to mediate endosomal fusion. The HOPS complex facilitates docking and fusion of lysosomes with late endosomes and several other types of vesicles. The HOPS complex is also involved in autophagy and crinophagy (the elimination of unused secretory granules through their fusion with lysosomes). The HOPS complex mediates autophagocitic flux, probably by binding autophagosome-associated Syx17/syntaxin 17, promoting assembly of the trans-SNARE complex and instigating autophagosome-lysosome fusion. Independent of Syx17/syntaxin 17, HOPS is involved in biosynthetic transport to lysosomes and lysosome-related organelles such as eye-pigment granules. Required for endocytic degradation of boss/bride of sevenless and N/Notch in developing ommatidia. The polypeptide is Vacuolar protein sorting-associated protein 16 homolog (Drosophila melanogaster (Fruit fly)).